The primary structure comprises 442 residues: Probable D-serine dehydratase (442 aa).

Residue lysine 115 is modified to N6-(pyridoxal phosphate)lysine.

It belongs to the serine/threonine dehydratase family. DsdA subfamily. Requires pyridoxal 5'-phosphate as cofactor.

It catalyses the reaction D-serine = pyruvate + NH4(+). This Halalkalibacterium halodurans (strain ATCC BAA-125 / DSM 18197 / FERM 7344 / JCM 9153 / C-125) (Bacillus halodurans) protein is Probable D-serine dehydratase.